A 130-amino-acid polypeptide reads, in one-letter code: Small ribosomal subunit protein uS11 (130 aa).

This sequence belongs to the universal ribosomal protein uS11 family. In terms of assembly, part of the 30S ribosomal subunit. Interacts with proteins S7 and S18. Binds to IF-3.

In terms of biological role, located on the platform of the 30S subunit, it bridges several disparate RNA helices of the 16S rRNA. Forms part of the Shine-Dalgarno cleft in the 70S ribosome. The chain is Small ribosomal subunit protein uS11 from Campylobacter hominis (strain ATCC BAA-381 / DSM 21671 / CCUG 45161 / LMG 19568 / NCTC 13146 / CH001A).